Reading from the N-terminus, the 78-residue chain is Putative antitoxin PF1222 (78 aa).

Belongs to the UPF0330 family.

In terms of biological role, possibly the antitoxin component of a type II toxin-antitoxin (TA) system. In Pyrococcus furiosus (strain ATCC 43587 / DSM 3638 / JCM 8422 / Vc1), this protein is Putative antitoxin PF1222.